Consider the following 372-residue polypeptide: DNA replication and repair protein RecF (372 aa).

Residue 30-37 participates in ATP binding; that stretch reads GENGQGKT.

It belongs to the RecF family.

The protein resides in the cytoplasm. Its function is as follows. The RecF protein is involved in DNA metabolism; it is required for DNA replication and normal SOS inducibility. RecF binds preferentially to single-stranded, linear DNA. It also seems to bind ATP. The polypeptide is DNA replication and repair protein RecF (Anaeromyxobacter dehalogenans (strain 2CP-1 / ATCC BAA-258)).